The following is an 874-amino-acid chain: Alanine--tRNA ligase (874 aa).

Residues histidine 562, histidine 566, cysteine 665, and histidine 669 each contribute to the Zn(2+) site.

Belongs to the class-II aminoacyl-tRNA synthetase family. The cofactor is Zn(2+).

It is found in the cytoplasm. It catalyses the reaction tRNA(Ala) + L-alanine + ATP = L-alanyl-tRNA(Ala) + AMP + diphosphate. Functionally, catalyzes the attachment of alanine to tRNA(Ala) in a two-step reaction: alanine is first activated by ATP to form Ala-AMP and then transferred to the acceptor end of tRNA(Ala). Also edits incorrectly charged Ser-tRNA(Ala) and Gly-tRNA(Ala) via its editing domain. This Pseudomonas syringae pv. tomato (strain ATCC BAA-871 / DC3000) protein is Alanine--tRNA ligase.